Consider the following 222-residue polypeptide: 7-cyano-7-deazaguanine synthase (222 aa).

Residue 9–19 (LSGGLDSATAA) participates in ATP binding. Residues Cys190, Cys198, Cys201, and Cys204 each coordinate Zn(2+).

It belongs to the QueC family. Zn(2+) serves as cofactor.

The catalysed reaction is 7-carboxy-7-deazaguanine + NH4(+) + ATP = 7-cyano-7-deazaguanine + ADP + phosphate + H2O + H(+). The protein operates within purine metabolism; 7-cyano-7-deazaguanine biosynthesis. In terms of biological role, catalyzes the ATP-dependent conversion of 7-carboxy-7-deazaguanine (CDG) to 7-cyano-7-deazaguanine (preQ(0)). This Synechococcus sp. (strain RCC307) protein is 7-cyano-7-deazaguanine synthase.